We begin with the raw amino-acid sequence, 293 residues long: Pyridoxal 5'-phosphate synthase subunit PdxS (293 aa).

Residue Asp23 coordinates D-ribose 5-phosphate. Lys80 functions as the Schiff-base intermediate with D-ribose 5-phosphate in the catalytic mechanism. Gly152 contributes to the D-ribose 5-phosphate binding site. Arg164 lines the D-glyceraldehyde 3-phosphate pocket. D-ribose 5-phosphate is bound by residues Gly213 and 234-235; that span reads GS.

Belongs to the PdxS/SNZ family. In the presence of PdxT, forms a dodecamer of heterodimers.

The enzyme catalyses aldehydo-D-ribose 5-phosphate + D-glyceraldehyde 3-phosphate + L-glutamine = pyridoxal 5'-phosphate + L-glutamate + phosphate + 3 H2O + H(+). The protein operates within cofactor biosynthesis; pyridoxal 5'-phosphate biosynthesis. Catalyzes the formation of pyridoxal 5'-phosphate from ribose 5-phosphate (RBP), glyceraldehyde 3-phosphate (G3P) and ammonia. The ammonia is provided by the PdxT subunit. Can also use ribulose 5-phosphate and dihydroxyacetone phosphate as substrates, resulting from enzyme-catalyzed isomerization of RBP and G3P, respectively. The sequence is that of Pyridoxal 5'-phosphate synthase subunit PdxS from Chloroflexus aurantiacus (strain ATCC 29366 / DSM 635 / J-10-fl).